The chain runs to 302 residues: Putative S-adenosyl-L-methionine-dependent methyltransferase MRA_0290 (302 aa).

S-adenosyl-L-methionine-binding positions include aspartate 126 and 155–156; that span reads DL.

The protein belongs to the UPF0677 family.

Exhibits S-adenosyl-L-methionine-dependent methyltransferase activity. The polypeptide is Putative S-adenosyl-L-methionine-dependent methyltransferase MRA_0290 (Mycobacterium tuberculosis (strain ATCC 25177 / H37Ra)).